The primary structure comprises 262 residues: Virulence plasmid protein pGP6-D-related protein (262 aa).

Belongs to the UPF0137 (pGP6-D) family.

This Chlamydia muridarum (strain MoPn / Nigg) protein is Virulence plasmid protein pGP6-D-related protein.